The sequence spans 371 residues: Neuropeptide Y receptor type 6 (371 aa).

Topologically, residues 1–31 (MEVLTNQPTPNKTSGKSNNSAFFYFESCQPP) are extracellular. Asparagine 11 and asparagine 18 each carry an N-linked (GlcNAc...) asparagine glycan. Residues 32–52 (FLAILLLLIAYTVILIMGIFG) form a helical membrane-spanning segment. Over 53–82 (NLSLIIIIFKKQREAQNVTNILIANLSLSD) the chain is Cytoplasmic. Residues 83 to 103 (ILVCVMCIPFTVIYTLMDHWV) form a helical membrane-spanning segment. Topologically, residues 104–111 (FGNTMCKL) are extracellular. Cysteine 109 and cysteine 196 are joined by a disulfide. A helical transmembrane segment spans residues 112-132 (TSYVQSVSVSVSIFSLVLIAI). Topologically, residues 133–150 (ERYQLIVNPRGWKPRVAH) are cytoplasmic. A helical transmembrane segment spans residues 151–171 (AYWGIILIWLISLTLSIPLFL). The Extracellular portion of the chain corresponds to 172-206 (SYHLTNEPFHNLSLPTDIYTHQVACVEIWPSKLNQ). An N-linked (GlcNAc...) asparagine glycan is attached at asparagine 182. Residues 207-227 (LLFSTSLFMLQYFVPLGFILI) form a helical membrane-spanning segment. Residues 228–263 (CYLKIVLCLRKRTRQVDRRKENKSRLNENKRVNVML) are Cytoplasmic-facing. Residues 264-284 (ISIVVTFGACWLPLNIFNVIF) traverse the membrane as a helical segment. Residues 285–297 (DWYHEMLMSCHHD) are Extracellular-facing. Residues 298–318 (LVFVVCHLIAMVSTCINPLFY) form a helical membrane-spanning segment. The Cytoplasmic portion of the chain corresponds to 319–371 (GFLNKNFQKDLMMLIHHCWCGEPQESYENIAMSTMHTDESKGSLKLAHIPTGI). Cysteine 336 is lipidated: S-palmitoyl cysteine.

The protein belongs to the G-protein coupled receptor 1 family. In terms of tissue distribution, kidney and discrete regions of the hypothalamus including the suprachiasmatic nucleus, anterior hypothalamus, bed nucleus stria terminalis, and the ventromedial nucleus.

The protein resides in the cell membrane. Receptor for neuropeptide Y and peptide YY. The rank order of affinity of this receptor for pancreatic polypeptides is NPY = PYY &gt;= NPY (2-36) = [Leu-31, Pro-34] NPY &gt; NPY (13-36) &gt; PP. The activity of this receptor is mediated by G proteins that inhibits adenylate cyclase activity. This Mus musculus (Mouse) protein is Neuropeptide Y receptor type 6 (Npy6r).